The chain runs to 119 residues: BLOC-1-related complex subunit 8 (119 aa).

S109 carries the post-translational modification Phosphoserine.

It belongs to the BORCS8 family. In terms of assembly, component of the BLOC-one-related complex (BORC) which is composed of BLOC1S1, BLOC1S2, BORCS5, BORCS6, BORCS7, BORCS8, KXD1 and SNAPIN.

The protein localises to the lysosome membrane. Its function is as follows. As part of the BLOC-one-related complex (BORC), it plays a role in the movement and localization of lysosomes at the cell periphery. Associated with the cytosolic face of lysosomes, BORC recruits ARL8B to the lysosomal membrane and couples lysosomes to microtubule plus-end-directed kinesin motors, driving lysosome movement toward the cell periphery. The chain is BLOC-1-related complex subunit 8 from Homo sapiens (Human).